The sequence spans 610 residues: Isocitrate dehydrogenase kinase/phosphatase (610 aa).

ATP contacts are provided by residues 359-365 (APGFKGT) and Lys-380. Asp-419 is an active-site residue.

Belongs to the AceK family.

It is found in the cytoplasm. The catalysed reaction is L-seryl-[isocitrate dehydrogenase] + ATP = O-phospho-L-seryl-[isocitrate dehydrogenase] + ADP + H(+). Its function is as follows. Bifunctional enzyme which can phosphorylate or dephosphorylate isocitrate dehydrogenase (IDH) on a specific serine residue. This is a regulatory mechanism which enables bacteria to bypass the Krebs cycle via the glyoxylate shunt in response to the source of carbon. When bacteria are grown on glucose, IDH is fully active and unphosphorylated, but when grown on acetate or ethanol, the activity of IDH declines drastically concomitant with its phosphorylation. This is Isocitrate dehydrogenase kinase/phosphatase from Rhodopseudomonas palustris (strain TIE-1).